We begin with the raw amino-acid sequence, 180 residues long: Beta-lactoglobulin (180 aa).

Residues 1 to 18 (MKCLLLALGLALACGIQA) form the signal peptide. 3 cysteine pairs are disulfide-bonded: cysteine 84–cysteine 178, cysteine 124–cysteine 137, and cysteine 124–cysteine 139.

The protein belongs to the calycin superfamily. Lipocalin family. In terms of assembly, under physiological conditions beta-lactoglobulin exists as an equilibrium mixture of monomeric and dimeric forms. Interaction with LMBR1L is controversial. In terms of processing, alternate disulfide bonds occur in equal amounts. Synthesized in mammary gland and secreted in milk.

It is found in the secreted. In terms of biological role, primary component of whey, it binds retinol and is probably involved in the transport of that molecule. The chain is Beta-lactoglobulin (LGB) from Capra hircus (Goat).